An 838-amino-acid polypeptide reads, in one-letter code: Protein translocase subunit SecA (838 aa).

ATP is bound by residues glutamine 85, 103 to 107 (GEGKT), and aspartate 493. Zn(2+) is bound by residues cysteine 823, cysteine 825, cysteine 834, and histidine 835.

The protein belongs to the SecA family. As to quaternary structure, monomer and homodimer. Part of the essential Sec protein translocation apparatus which comprises SecA, SecYEG and auxiliary proteins SecDF. Other proteins may also be involved. The cofactor is Zn(2+).

It localises to the cell membrane. The protein localises to the cytoplasm. The catalysed reaction is ATP + H2O + cellular proteinSide 1 = ADP + phosphate + cellular proteinSide 2.. Part of the Sec protein translocase complex. Interacts with the SecYEG preprotein conducting channel. Has a central role in coupling the hydrolysis of ATP to the transfer of proteins into and across the cell membrane, serving as an ATP-driven molecular motor driving the stepwise translocation of polypeptide chains across the membrane. The chain is Protein translocase subunit SecA from Streptococcus gordonii (strain Challis / ATCC 35105 / BCRC 15272 / CH1 / DL1 / V288).